The following is a 428-amino-acid chain: Enolase (428 aa).

Gln163 is a (2R)-2-phosphoglycerate binding site. The active-site Proton donor is the Glu205. Residues Asp242, Glu285, and Asp312 each contribute to the Mg(2+) site. Positions 337, 366, 367, and 388 each coordinate (2R)-2-phosphoglycerate. Lys337 serves as the catalytic Proton acceptor.

This sequence belongs to the enolase family. It depends on Mg(2+) as a cofactor.

The protein localises to the cytoplasm. Its subcellular location is the secreted. The protein resides in the cell surface. The catalysed reaction is (2R)-2-phosphoglycerate = phosphoenolpyruvate + H2O. Its pathway is carbohydrate degradation; glycolysis; pyruvate from D-glyceraldehyde 3-phosphate: step 4/5. Functionally, catalyzes the reversible conversion of 2-phosphoglycerate (2-PG) into phosphoenolpyruvate (PEP). It is essential for the degradation of carbohydrates via glycolysis. This is Enolase from Moorella thermoacetica (strain ATCC 39073 / JCM 9320).